A 228-amino-acid chain; its full sequence is E3 ubiquitin-protein ligase RNF114 (228 aa).

Residues 29–68 form an RING-type zinc finger; the sequence is CPVCLEVYEKPVQVPCGHVFCSACLQECLKPKKPVCGVCR. Zn(2+) contacts are provided by cysteine 91 and cysteine 94. Residues 91 to 110 form a C2HC RNF-type zinc finger; sequence CHGCRKNFFLSKIRAHVATC. The residue at position 102 (lysine 102) is an N6-acetyllysine. Residues histidine 106 and cysteine 110 each contribute to the Zn(2+) site. The residue at position 112 (lysine 112) is an N6-acetyllysine.

In terms of assembly, interacts with XAF1, the interaction increases XAF1 stability and proapoptotic effects, and may regulate IFN signaling. In terms of processing, autoubiquitinated. Polyubiquitinated in the presence of E2 enzymes UBE2D1, UBE2D2 and UBE2D3, but only monoubiquitinated in the presence of UBE2E1.

Its subcellular location is the cytoplasm. It is found in the nucleus. The catalysed reaction is S-ubiquitinyl-[E2 ubiquitin-conjugating enzyme]-L-cysteine + [acceptor protein]-L-lysine = [E2 ubiquitin-conjugating enzyme]-L-cysteine + N(6)-ubiquitinyl-[acceptor protein]-L-lysine.. It functions in the pathway protein modification; protein ubiquitination. Functionally, E3 ubiquitin-protein ligase that promotes the ubiquitination of various substrates. In turn, participates in the regulation of many biological processes including cell cycle, apoptosis, osteoclastogenesis as well as innate or adaptive immunity. Acts as negative regulator of NF-kappa-B-dependent transcription by promoting the ubiquitination and stabilization of the NF-kappa-B inhibitor TNFAIP3. May promote the ubiquitination of TRAF6 as well. Also acts as a negative regulator of T-cell activation. Inhibits cellular dsRNA responses and interferon production by targeting MAVS component for proteasomal degradation. Ubiquitinates the CDK inhibitor CDKN1A leading to its degradationand probably also CDKN1B and CDKN1C. This activity stimulates cell cycle G1-to-S phase transition and suppresses cellular senescence. May play a role in spermatogenesis. Inhibits classical swine fever virus replication by mediating 'K27'-linked ubiquitination of viral NS4B and inducing its degradation via the proteasome. This Sus scrofa (Pig) protein is E3 ubiquitin-protein ligase RNF114 (RNF114).